A 997-amino-acid chain; its full sequence is Protein argonaute 5 (997 aa).

Composition is skewed to gly residues over residues 1–16 and 43–59; these read MSNR…SRGR and GGRG…GNVG. Residues 1–144 are disordered; that stretch reads MSNRGGGGHG…TSLPPASSKA (144 aa). Residues 93–106 show a composition bias toward low complexity; that stretch reads SVASSSKTVSVASS. Polar residues predominate over residues 116 to 129; that stretch reads VSETMSNLQITSTE. The PAZ domain maps to 360–471; it reads VVTDFISKFL…LPMELCQIDE (112 aa). The region spanning 638–958 is the Piwi domain; sequence LLIVILPDVT…AAFRARYYME (321 aa). Residues Asp-721 and Asp-807 each contribute to the a divalent metal cation site. 3 interaction with guide RNA regions span residues 847-848, 893-901, and 930-952; these read KR, HAGIQGTSR, and YARC…AAFR. Residue His-947 participates in a divalent metal cation binding.

It belongs to the argonaute family. Ago subfamily. The cofactor is Mg(2+). It depends on Mn(2+) as a cofactor.

In terms of biological role, involved in RNA-mediated post-transcriptional gene silencing (PTGS). Main component of the RNA-induced silencing complex (RISC) that binds to a short guide RNA such as a microRNA (miRNA) or small interfering RNA (siRNA). RISC uses the mature miRNA or siRNA as a guide for slicer-directed cleavage of homologous mRNAs to repress gene expression. Associates with siRNAs of various sizes, from 21-24 nucleotide in length and preferentially recruits small RNAs with a 5' terminal cytosine. Probably involved in antiviral RNA silencing. Associates with siRNAs derived from cucumber mosaic virus (CMV). Targeted by the turnip yellows virus (TuYV) protein P0 (via F-box-like domain) for probable proteasome degradation and thereby inactivating AGO5 function in RNA silencing. This is Protein argonaute 5 (AGO5) from Arabidopsis thaliana (Mouse-ear cress).